We begin with the raw amino-acid sequence, 244 residues long: tRNA pseudouridine synthase A (244 aa).

The active-site Nucleophile is the D52. Substrate is bound at residue Y110.

The protein belongs to the tRNA pseudouridine synthase TruA family. Homodimer.

The enzyme catalyses uridine(38/39/40) in tRNA = pseudouridine(38/39/40) in tRNA. Functionally, formation of pseudouridine at positions 38, 39 and 40 in the anticodon stem and loop of transfer RNAs. The protein is tRNA pseudouridine synthase A of Pelobacter propionicus (strain DSM 2379 / NBRC 103807 / OttBd1).